The chain runs to 405 residues: Potassium channel subfamily K member 18 (405 aa).

The chain crosses the membrane as a helical span at residues 43-63 (LPGLCFLCCLVTYALVGAALF). The N-linked (GlcNAc...) asparagine glycan is linked to N94. Residues 125 to 151 (FLSALFFCCTVFSTVGYGHMYPVTRLG) constitute an intramembrane region (pore-forming). Residues T138, V139, G140, and Y141 each coordinate K(+). Residues 138-143 (TVGYGH) form a selectivity filter 1 region. The chain crosses the membrane as a helical span at residues 153–173 (FLCMLYALFGIPLMFLVLTDI). The interval 221 to 226 (PQIVID) is interaction with calcineurin. The interval 272–277 (RSNSCP) is interaction with YWHAH. 2 positions are modified to phosphoserine: S275 and S287. A helical membrane pass occupies residues 304 to 324 (IPLPVIALVIFAYISCAAAIL). An intramembrane region (pore-forming) is located at residues 337–351 (FYFCFVTLTTIGFGD). Residues 346-351 (TIGFGD) are selectivity filter 2. The helical transmembrane segment at 358–378 (HFFLFFSIYIIVGMEILFIAF) threads the bilayer.

This sequence belongs to the two pore domain potassium channel (TC 1.A.1.8) family. In terms of assembly, homodimer. Heterodimer with KCNK2. Heterodimer with KCNK10. Interacts with calcineurin. Interacts with YWHAH, in a phosphorylation-dependent manner. Phosphorylation of Ser-275 is required for the binding of 14-3-3eta/YWHAH. Calcineurin-mediated dephosphorylation of Ser-287 enhances channel activity. Post-translationally, N-glycosylated.

It localises to the cell membrane. The catalysed reaction is K(+)(in) = K(+)(out). Its activity is regulated as follows. Activated by volatile anesthetics, such as isoflurane and inhibited by local anesthetics such as bupivacaine and lidocaine. Inhibited by extracellular acidic pH. Inhibited by Zn(2+) ions. In terms of biological role, k(+) channel that conducts outward and inward rectifying currents at depolarized and hyperpolarized membrane potentials, respectively. The outward rectifying currents are voltage-dependent, coupled to K(+) electrochemical gradient across the membrane, whereas the inward currents can be induced in response to activation of Ca(2+)-mobilizing receptors. Homo- and heterodimerizes to form functional channels with distinct regulatory and gating properties. In trigeminal ganglia sensory neurons, the heterodimers of KCNK18/TRESK and KCNK2/TREK-1 or KCNK10/TREK-2 inhibit neuronal firing and neurogenic inflammation by stabilizing the resting membrane potential at K(+) equilibrium potential as well as by regulating the threshold of action potentials and the spike frequency. In thymocytes, conducts K(+) currents upon T cell receptor (TCR) signaling leading to sustained Ca(2+) influx and NF-kappa-B activation, FOXP3 transcription and positive selection of regulatory T cell (Treg) progenitor subsets. Appears to mediate the analgesics effects of hydroxy-alpha-sanshool, a metabolite naturally present in Schezuan pepper and other Xanthoxylum plants. In Rattus norvegicus (Rat), this protein is Potassium channel subfamily K member 18 (Kcnk18).